The primary structure comprises 284 residues: MARIILTAPLFYFFFSLLSHQTMSQPQHMHTFCSVDSFTQTSSYETNRNILLTTLSLTSSLVHYLNATIGLSPDTVYGMFLCRGDINTTSCSDCVQTAAIEIATNCTLNKRAFIYYDECMVRYSNVSFFSEFESKPVIVRYSLRSAPNSNRFNQTLSNKLDQLIPNVSPSTLIPYFVEDQERVTQLEGSYDLVSMIQCSPDLDPSNCTICLRFAYATVSTCCGVPSSALIFTPKCILRYRTFVLPSPAPSPSSLPPISPTSSPPLSLPPQLPPPLSQPPPPLST.

An N-terminal signal peptide occupies residues 1–24 (MARIILTAPLFYFFFSLLSHQTMS). Gnk2-homologous domains follow at residues 26 to 128 (PQHM…NVSF) and 134 to 244 (SKPV…TFVL). Residues 247-284 (PAPSPSSLPPISPTSSPPLSLPPQLPPPLSQPPPPLST) are disordered.

This sequence belongs to the cysteine-rich repeat secretory protein family.

Its subcellular location is the secreted. In Arabidopsis thaliana (Mouse-ear cress), this protein is Putative cysteine-rich repeat secretory protein 7 (CRRSP7).